The following is a 253-amino-acid chain: 5'-nucleotidase SurE (253 aa).

A divalent metal cation-binding residues include Asp-8, Asp-9, Ser-39, and Asn-97.

The protein belongs to the SurE nucleotidase family. A divalent metal cation is required as a cofactor.

The protein localises to the cytoplasm. The catalysed reaction is a ribonucleoside 5'-phosphate + H2O = a ribonucleoside + phosphate. Functionally, nucleotidase that shows phosphatase activity on nucleoside 5'-monophosphates. The sequence is that of 5'-nucleotidase SurE from Aeromonas hydrophila subsp. hydrophila (strain ATCC 7966 / DSM 30187 / BCRC 13018 / CCUG 14551 / JCM 1027 / KCTC 2358 / NCIMB 9240 / NCTC 8049).